The primary structure comprises 422 residues: SH2 domain-containing protein 4A (422 aa).

Phosphoserine is present on residues serine 117 and serine 123. Disordered regions lie at residues proline 141–lysine 190 and serine 202–threonine 282. Basic and acidic residues-rich tracts occupy residues threonine 163–lysine 190 and lysine 212–arginine 231. Phosphoserine is present on serine 233. The 93-residue stretch at tryptophan 316–cysteine 408 folds into the SH2 domain.

Interacts with ESR1.

Its subcellular location is the cytoplasm. Its function is as follows. Inhibits estrogen-induced cell proliferation by competing with PLCG for binding to ESR1, blocking the effect of estrogen on PLCG and repressing estrogen-induced proliferation. May play a role in T-cell development and function. This Rattus norvegicus (Rat) protein is SH2 domain-containing protein 4A (Sh2d4a).